We begin with the raw amino-acid sequence, 191 residues long: Thiol:disulfide interchange protein TxlA (191 aa).

Residues 14 to 30 (ILVIAAALVLTILVVLG) traverse the membrane as a helical segment. In terms of domain architecture, Thioredoxin spans 27–148 (VVLGSRQPSA…LAANLDALVE (122 aa)). Cys-69 and Cys-72 are disulfide-bonded. The span at 165-185 (SADLQPSRSSQTDPRSHSGQV) shows a compositional bias: polar residues. Residues 165–191 (SADLQPSRSSQTDPRSHSGQVQDGVLD) are disordered.

It belongs to the thioredoxin family.

The protein resides in the cell membrane. Its function is as follows. Required for disulfide bond formation in some proteins. Acts by transferring its disulfide bond to other proteins and is reduced in the process. In Synechococcus elongatus (strain ATCC 33912 / PCC 7942 / FACHB-805) (Anacystis nidulans R2), this protein is Thiol:disulfide interchange protein TxlA (txlA).